The sequence spans 577 residues: Arginine--tRNA ligase (577 aa).

The short motif at 122–132 is the 'HIGH' region element; that stretch reads PNVAKEMHVGH.

This sequence belongs to the class-I aminoacyl-tRNA synthetase family. As to quaternary structure, monomer.

Its subcellular location is the cytoplasm. The enzyme catalyses tRNA(Arg) + L-arginine + ATP = L-arginyl-tRNA(Arg) + AMP + diphosphate. This is Arginine--tRNA ligase from Aliivibrio fischeri (strain ATCC 700601 / ES114) (Vibrio fischeri).